The following is a 62-amino-acid chain: Small ribosomal subunit protein eS27 (62 aa).

Cysteine 17, cysteine 20, cysteine 36, and cysteine 39 together coordinate Zn(2+). A C4-type zinc finger spans residues 17–39 (CPDCENEQLVFEKATSVVECTVC).

Belongs to the eukaryotic ribosomal protein eS27 family. In terms of assembly, part of the 30S ribosomal subunit. Zn(2+) serves as cofactor.

The chain is Small ribosomal subunit protein eS27 from Methanocorpusculum labreanum (strain ATCC 43576 / DSM 4855 / Z).